The following is a 616-amino-acid chain: Chaperone protein HtpG (616 aa).

Positions 1–333 are a; substrate-binding; that stretch reads MKKQFDTEVN…CQDLPLNVSR (333 aa). The segment at 334–542 is b; that stretch reads EILQQNKILS…SNDPTYQMQK (209 aa). The tract at residues 543-616 is c; sequence IMLSMGQEVK…INEFLEKELL (74 aa).

This sequence belongs to the heat shock protein 90 family. In terms of assembly, homodimer.

The protein resides in the cytoplasm. In terms of biological role, molecular chaperone. Has ATPase activity. The polypeptide is Chaperone protein HtpG (Borrelia garinii subsp. bavariensis (strain ATCC BAA-2496 / DSM 23469 / PBi) (Borreliella bavariensis)).